Here is a 201-residue protein sequence, read N- to C-terminus: Small ribosomal subunit protein uS4 (201 aa).

In terms of domain architecture, S4 RNA-binding spans 91-155 (SRLDNVVYRA…STLPFQVARE (65 aa)).

The protein belongs to the universal ribosomal protein uS4 family. In terms of assembly, part of the 30S ribosomal subunit. Contacts protein S5. The interaction surface between S4 and S5 is involved in control of translational fidelity.

Its function is as follows. One of the primary rRNA binding proteins, it binds directly to 16S rRNA where it nucleates assembly of the body of the 30S subunit. With S5 and S12 plays an important role in translational accuracy. This Rhodococcus jostii (strain RHA1) protein is Small ribosomal subunit protein uS4.